A 612-amino-acid polypeptide reads, in one-letter code: Probable serine/threonine-protein kinase WNK4 (612 aa).

Residues 25–282 (IRYNEVLGRG…AKELLQDPFL (258 aa)) form the Protein kinase domain. ATP is bound by residues 105–108 (TELF) and Lys-155. Asp-172 (proton acceptor) is an active-site residue.

The protein belongs to the protein kinase superfamily. Ser/Thr protein kinase family. WNK subfamily.

The catalysed reaction is L-seryl-[protein] + ATP = O-phospho-L-seryl-[protein] + ADP + H(+). The enzyme catalyses L-threonyl-[protein] + ATP = O-phospho-L-threonyl-[protein] + ADP + H(+). This chain is Probable serine/threonine-protein kinase WNK4 (WNK4), found in Oryza sativa subsp. japonica (Rice).